A 175-amino-acid polypeptide reads, in one-letter code: Translation initiation factor IF-3 (175 aa).

The protein belongs to the IF-3 family. In terms of assembly, monomer.

The protein resides in the cytoplasm. Its function is as follows. IF-3 binds to the 30S ribosomal subunit and shifts the equilibrium between 70S ribosomes and their 50S and 30S subunits in favor of the free subunits, thus enhancing the availability of 30S subunits on which protein synthesis initiation begins. This is Translation initiation factor IF-3 from Chlamydia trachomatis serovar D (strain ATCC VR-885 / DSM 19411 / UW-3/Cx).